Consider the following 451-residue polypeptide: tRNA-2-methylthio-N(6)-dimethylallyladenosine synthase (451 aa).

Residues 11 to 127 (RHYHITTFGC…LEDLLQQVFD (117 aa)) enclose the MTTase N-terminal domain. Residues Cys20, Cys56, Cys90, Cys162, Cys166, and Cys169 each coordinate [4Fe-4S] cluster. Residues 148 to 385 (RDSTITAWVN…NHLVAQKAAE (238 aa)) enclose the Radical SAM core domain. One can recognise a TRAM domain in the interval 388–451 (QRYLGRIEEV…RAFSLTGEIV (64 aa)).

This sequence belongs to the methylthiotransferase family. MiaB subfamily. In terms of assembly, monomer. [4Fe-4S] cluster is required as a cofactor.

It localises to the cytoplasm. The enzyme catalyses N(6)-dimethylallyladenosine(37) in tRNA + (sulfur carrier)-SH + AH2 + 2 S-adenosyl-L-methionine = 2-methylsulfanyl-N(6)-dimethylallyladenosine(37) in tRNA + (sulfur carrier)-H + 5'-deoxyadenosine + L-methionine + A + S-adenosyl-L-homocysteine + 2 H(+). Functionally, catalyzes the methylthiolation of N6-(dimethylallyl)adenosine (i(6)A), leading to the formation of 2-methylthio-N6-(dimethylallyl)adenosine (ms(2)i(6)A) at position 37 in tRNAs that read codons beginning with uridine. This chain is tRNA-2-methylthio-N(6)-dimethylallyladenosine synthase, found in Rippkaea orientalis (strain PCC 8801 / RF-1) (Cyanothece sp. (strain PCC 8801)).